The sequence spans 193 residues: Riboflavin kinase (193 aa).

The H-T-H motif-like stretch occupies residues 1 to 59; sequence MGISQQAASQHLRELEDEGLITRNAEGKGISVMVTDKGRHELLRVYNILHDSLHSRPDH. Residues 60–193 form a riboflavin kinase region; it reads VEITGTLVSG…TIRIPLEQED (134 aa). Residue 69–74 participates in CDP binding; the sequence is GMNEGA. Positions 98 and 100 each coordinate Mg(2+). Residues Thr156 and Glu164 each contribute to the FMN site. 169–172 contributes to the CDP binding site; the sequence is LDIR.

This sequence belongs to the archaeal riboflavin kinase family. Requires Mg(2+) as cofactor.

It carries out the reaction riboflavin + CTP = CDP + FMN + H(+). The protein operates within cofactor biosynthesis; FMN biosynthesis; FMN from riboflavin (CTP route): step 1/1. In terms of biological role, catalyzes the CTP-dependent phosphorylation of riboflavin (vitamin B2) to form flavin mononucleotide (FMN). The polypeptide is Riboflavin kinase (ribK) (Cenarchaeum symbiosum (strain A)).